Here is a 265-residue protein sequence, read N- to C-terminus: Imidazole glycerol phosphate synthase subunit HisF (265 aa).

Active-site residues include D11 and D130.

This sequence belongs to the HisA/HisF family. In terms of assembly, heterodimer of HisH and HisF.

The protein resides in the cytoplasm. The catalysed reaction is 5-[(5-phospho-1-deoxy-D-ribulos-1-ylimino)methylamino]-1-(5-phospho-beta-D-ribosyl)imidazole-4-carboxamide + L-glutamine = D-erythro-1-(imidazol-4-yl)glycerol 3-phosphate + 5-amino-1-(5-phospho-beta-D-ribosyl)imidazole-4-carboxamide + L-glutamate + H(+). It participates in amino-acid biosynthesis; L-histidine biosynthesis; L-histidine from 5-phospho-alpha-D-ribose 1-diphosphate: step 5/9. In terms of biological role, IGPS catalyzes the conversion of PRFAR and glutamine to IGP, AICAR and glutamate. The HisF subunit catalyzes the cyclization activity that produces IGP and AICAR from PRFAR using the ammonia provided by the HisH subunit. This is Imidazole glycerol phosphate synthase subunit HisF from Idiomarina loihiensis (strain ATCC BAA-735 / DSM 15497 / L2-TR).